Reading from the N-terminus, the 95-residue chain is Putative septation protein SpoVG (95 aa).

This sequence belongs to the SpoVG family.

Its function is as follows. Could be involved in septation. This Brevibacillus brevis (strain 47 / JCM 6285 / NBRC 100599) protein is Putative septation protein SpoVG.